Here is a 410-residue protein sequence, read N- to C-terminus: Peptidase T (410 aa).

Position 79 (His-79) interacts with Zn(2+). Asp-81 is an active-site residue. Asp-142 lines the Zn(2+) pocket. The active-site Proton acceptor is the Glu-176. The Zn(2+) site is built by Glu-177, Asp-199, and His-381.

The protein belongs to the peptidase M20B family. It depends on Zn(2+) as a cofactor.

The protein resides in the cytoplasm. It catalyses the reaction Release of the N-terminal residue from a tripeptide.. In terms of biological role, cleaves the N-terminal amino acid of tripeptides. This is Peptidase T from Bacillus pumilus (strain SAFR-032).